We begin with the raw amino-acid sequence, 310 residues long: MAIALEYVREIYYRPLLQLVYEAQTVHRQHHPPGRVQLCALVNIKSGRCPEDCAYCPQSARYSTGIETYPLISLESLRQQAMAAQRAGATRLCMGAAWRSAPAGEAFERVLEMVRLVRKLGMEACVTLGMVSAAQAQQLAAAGLTAYNHNLDTSPAFYPRIITTRTYRDRLETLAHVAAAGLQICCGGIVGLGESDEDRIGLLHVLANLTPPPTSVPINALVPVAGTPLGQLPPPDPLLLVRTIATARLLLPTAQIRLSAGRKNLSESEQALCFLAGANSIFTGERLLTTPNPGQAADAALLEKLGLQPL.

Residues glycine 34–arginine 262 form the Radical SAM core domain. Cysteine 49, cysteine 53, and cysteine 56 together coordinate [4Fe-4S] cluster. [2Fe-2S] cluster is bound by residues cysteine 93, cysteine 125, cysteine 185, and arginine 257.

Belongs to the radical SAM superfamily. Biotin synthase family. Homodimer. [4Fe-4S] cluster serves as cofactor. Requires [2Fe-2S] cluster as cofactor.

The catalysed reaction is (4R,5S)-dethiobiotin + (sulfur carrier)-SH + 2 reduced [2Fe-2S]-[ferredoxin] + 2 S-adenosyl-L-methionine = (sulfur carrier)-H + biotin + 2 5'-deoxyadenosine + 2 L-methionine + 2 oxidized [2Fe-2S]-[ferredoxin]. The protein operates within cofactor biosynthesis; biotin biosynthesis; biotin from 7,8-diaminononanoate: step 2/2. Functionally, catalyzes the conversion of dethiobiotin (DTB) to biotin by the insertion of a sulfur atom into dethiobiotin via a radical-based mechanism. This Synechococcus sp. (strain JA-3-3Ab) (Cyanobacteria bacterium Yellowstone A-Prime) protein is Biotin synthase.